Here is a 25-residue protein sequence, read N- to C-terminus: Caerin-2.4 (25 aa).

Expressed by the skin parotoid and/or rostral glands.

Its subcellular location is the secreted. Functionally, antibacterial peptide, that adopts an alpha helical conformation which can disrupt bacterial membranes. Each caerin displays a different antimicrobial specificity. The chain is Caerin-2.4 from Ranoidea caerulea (Green tree frog).